The chain runs to 262 residues: Apolipoprotein A-Ia (262 aa).

The N-terminal stretch at 1 to 18 (MKFVALALTLLLALGSQA) is a signal peptide. Residues 32–63 (YKAAALVYLNQVKDQAEKALDNLDGTDYEQYK) are 3 X approximate tandem repeats. Tandem repeats lie at residues 64-85 (LQLSESLTKLQEYAQTTSQALT) and 87-107 (YAETISTQLMENTKQLRERVM). Positions 64 to 262 (LQLSESLTKL…YETIAKAIQA (199 aa)) are 10 X approximate tandem repeats. Residues 108–118 (TDVEDLRSKLE) form a 3; half-length repeat. 5 consecutive repeat copies span residues 119–140 (PHRAELYTALQKHIDEYREKLE), 141–162 (PVFQEYSALNRQNAEQLRAKLE), 163–184 (PLMDDIRKAFESNIEETKSKVV), 185–206 (PMVEAVRTKLTERLEDLRTMAA), and 207–228 (PYAEEYKEQLVKAVEEAREKIA). One copy of the 9; half-length repeat lies at 229–239 (PHTQDLQTRME). Copy 10 of the repeat occupies 240 to 262 (PYMENVRTTFAQMYETIAKAIQA).

The protein belongs to the apolipoprotein A1/A4/E family. In terms of assembly, homodimer. Interacts with naxe and yjefn3.

The protein localises to the secreted. Functionally, participates in the reverse transport of cholesterol from tissues to the liver for excretion by promoting cholesterol efflux from tissues and by acting as a cofactor for the lecithin cholesterol acyltransferase (LCAT). The protein is Apolipoprotein A-Ia of Danio rerio (Zebrafish).